Reading from the N-terminus, the 383-residue chain is Putative [LysW]-aminoadipate semialdehyde/glutamate semialdehyde transaminase (383 aa).

Residues 97-98 (GT) and Phe124 each bind pyridoxal 5'-phosphate. Arg127 provides a ligand contact to substrate. 209–212 (DEVQ) is a pyridoxal 5'-phosphate binding site. Residue Lys238 is modified to N6-(pyridoxal phosphate)lysine. Substrate is bound at residue Ser266. Thr267 provides a ligand contact to pyridoxal 5'-phosphate.

This sequence belongs to the class-III pyridoxal-phosphate-dependent aminotransferase family. LysJ subfamily. Homodimer. Pyridoxal 5'-phosphate serves as cofactor.

The protein resides in the cytoplasm. It carries out the reaction [amino-group carrier protein]-C-terminal-gamma-(L-lysyl)-L-glutamate + 2-oxoglutarate = [amino-group carrier protein]-C-terminal-N-(1-carboxy-5-oxopentan-1-yl)-L-glutamine + L-glutamate. The enzyme catalyses [amino-group carrier protein]-C-terminal-gamma-(L-ornithyl)-L-glutamate + 2-oxoglutarate = [amino-group carrier protein]-C-terminal-gamma-(L-glutamyl-5-semialdehyde)-L-glutamate + L-glutamate. It participates in amino-acid biosynthesis; L-lysine biosynthesis via AAA pathway; L-lysine from L-alpha-aminoadipate (Thermus route): step 4/5. It functions in the pathway amino-acid biosynthesis; L-arginine biosynthesis. Involved in both the arginine and lysine biosynthetic pathways. The chain is Putative [LysW]-aminoadipate semialdehyde/glutamate semialdehyde transaminase from Pyrobaculum aerophilum (strain ATCC 51768 / DSM 7523 / JCM 9630 / CIP 104966 / NBRC 100827 / IM2).